Here is a 964-residue protein sequence, read N- to C-terminus: Activator of stress genes 1 (964 aa).

A DNA-binding region (zn(2)-C6 fungal-type) is located at residues 21 to 47; sequence CDECRKKKVKCDGQQPCIHCTVYSYEC. Residues 104–125 form a disordered region; that stretch reads ASTIPASNNPSKPRKYKTKSTR. Ser166 carries the post-translational modification Phosphoserine; by ATM or ATR. Ser186 bears the Phosphoserine mark. Polar residues-rich tracts occupy residues 190–201, 209–225, and 733–759; these read PVLSSNSKNSTP, KSDS…DSVD, and NNTP…TNMS. 3 disordered regions span residues 190 to 225, 733 to 764, and 800 to 900; these read PVLS…DSVD, NNTP…ERDP, and NSAF…SPSY. Over residues 800-896 the composition is skewed to low complexity; it reads NSAFDFSSSK…NDFGIKIDNN (97 aa). Ser963 carries the phosphoserine modification.

It belongs to the ASG1 family.

The protein resides in the nucleus. Probable transcription factor involved in the stress response. The protein is Activator of stress genes 1 (ASG1) of Saccharomyces cerevisiae (strain ATCC 204508 / S288c) (Baker's yeast).